Reading from the N-terminus, the 165-residue chain is S-(2-succino)cysteine N-acetyltransferase (165 aa).

An N-acetyltransferase domain is found at 3–162; sequence PRYRLAVERD…ITVYMKKQLR (160 aa).

Belongs to the acetyltransferase family.

The enzyme catalyses S-(2-succino)-L-cysteine + acetyl-CoA = N-acetyl-S-(2-succino)-L-cysteine + CoA + H(+). Its pathway is amino-acid biosynthesis; L-cysteine biosynthesis. In terms of biological role, catalyzes the N-acetylation of S-(2-succino)cysteine. Is involved in a S-(2-succino)cysteine (2SC) degradation pathway that allows B.subtilis to grow on 2SC as a sole sulfur source, via its metabolization to cysteine. Moreover, 2SC is a toxic compound in B.subtilis at high exogenous concentrations, and this enzyme relieves 2SC toxicity via N-acetylation. The protein is S-(2-succino)cysteine N-acetyltransferase of Bacillus subtilis (strain 168).